The chain runs to 324 residues: Olfactory receptor 4K15 (324 aa).

Residues 1–25 (MNETNHSRVTEFVLLGLSSSRELQP) are Extracellular-facing. Residues N2 and N5 are each glycosylated (N-linked (GlcNAc...) asparagine). Residues 26-49 (FLFLTFSLLYLAILLGNFLIILTV) form a helical membrane-spanning segment. Over 50 to 57 (TSDSRLHT) the chain is Cytoplasmic. The chain crosses the membrane as a helical span at residues 58–79 (PMYFLLANLSFIDVCVASFATP). At 80–100 (KMIADFLVERKTISFDACLAQ) the chain is on the extracellular side. A disulfide bridge connects residues C97 and C189. A helical transmembrane segment spans residues 101-120 (IFFVHLFTGSEMVLLVSMAY). The Cytoplasmic segment spans residues 121-139 (DRYVAICKPLHYMTVMSRR). Residues 140 to 158 (VCVVLVLISWFVGFIHTTS) traverse the membrane as a helical segment. Over 159-195 (QLAFTVNLPFCGPNKVDSFFCDLPLVTKLACIDTYVV) the chain is Extracellular. A helical membrane pass occupies residues 196-219 (SLLIVADSGFLSLSSFLLLVVSYT). Over 220-235 (VILVTVRNRSSASMAK) the chain is Cytoplasmic. A helical transmembrane segment spans residues 236-258 (ARSTLTAHITVVTLFFGPCIFIY). Over 259–269 (VWPFSSYSVDK) the chain is Extracellular. Residues 270-289 (VLAVFYTIFTLILNPVIYTL) form a helical membrane-spanning segment. Residues 290–324 (RNKEVKAAMSKLKSRYLKPSQVSVVIRNVLFLETK) are Cytoplasmic-facing.

It belongs to the G-protein coupled receptor 1 family.

Its subcellular location is the cell membrane. Functionally, odorant receptor. The chain is Olfactory receptor 4K15 (OR4K15) from Homo sapiens (Human).